The chain runs to 499 residues: MEFSVKNGSVEKQRTACLVVGVYEPRRLSAAAEQLDKLSEGYISTLLRRGDLEGKAGQTLLLHNVPNVPADRVLLVGCGKERELTERQYKQIIQKMVQAVSETGSMEVVCFLTELHVKGRTSYWNVRFAIEAIQESLYSYNDFKSIKPEVRREFRRVIFNVANRKDLADAERALEQGKAISTGVAFAKNVANCPPNVCNPAYLAELAKGLAAEYDNIRTTVIDEAEMAALGMNAYLAVSRGSQNPAYLSVIEYKNHPNPDAKPIVLVGKGLTFDSGGISIKPSDSMDEMKYDMGGAASVYGTMKALAEMKLPLNVIGVLAGCENMPDGNAYRPGDILTTMNGLTVEVLNTDAEGRLVLCDTLTYVERFEPELVIDMATLTGACMIALGAHNSGLMSTSNVLANDLLNAAEQADDKAWRLPLGEEYQEQLKSNFADLANIGGRLGGAITAGQLLSNFTKKYVWAHLDIAGTAWKSGVAKGATGRPVSLLSQFLINKANNQ.

Mn(2+) contacts are provided by Lys-269 and Asp-274. Residue Lys-281 is part of the active site. Residues Asp-292, Asp-351, and Glu-353 each coordinate Mn(2+). Arg-355 is a catalytic residue.

Belongs to the peptidase M17 family. Mn(2+) is required as a cofactor.

It localises to the cytoplasm. The enzyme catalyses Release of an N-terminal amino acid, Xaa-|-Yaa-, in which Xaa is preferably Leu, but may be other amino acids including Pro although not Arg or Lys, and Yaa may be Pro. Amino acid amides and methyl esters are also readily hydrolyzed, but rates on arylamides are exceedingly low.. It carries out the reaction Release of an N-terminal amino acid, preferentially leucine, but not glutamic or aspartic acids.. Presumably involved in the processing and regular turnover of intracellular proteins. Catalyzes the removal of unsubstituted N-terminal amino acids from various peptides. This chain is Probable cytosol aminopeptidase, found in Actinobacillus pleuropneumoniae serotype 3 (strain JL03).